Consider the following 78-residue polypeptide: MSNIEERVKKIIVEQLGVDEAEVKNESSFVEDLGADSLDTVELVMALEEEFDTEIPDEEAEKITTVQAAIDYVTSNAQ.

The region spanning 2 to 77 is the Carrier domain; sequence SNIEERVKKI…AAIDYVTSNA (76 aa). The residue at position 37 (Ser37) is an O-(pantetheine 4'-phosphoryl)serine.

The protein belongs to the acyl carrier protein (ACP) family. In terms of processing, 4'-phosphopantetheine is transferred from CoA to a specific serine of apo-ACP by AcpS. This modification is essential for activity because fatty acids are bound in thioester linkage to the sulfhydryl of the prosthetic group.

The protein localises to the cytoplasm. It functions in the pathway lipid metabolism; fatty acid biosynthesis. Its function is as follows. Carrier of the growing fatty acid chain in fatty acid biosynthesis. The protein is Acyl carrier protein of Vibrio cholerae serotype O1 (strain ATCC 39315 / El Tor Inaba N16961).